The following is a 491-amino-acid chain: Glutamyl-tRNA(Gln) amidotransferase subunit A (491 aa).

Catalysis depends on charge relay system residues lysine 76 and serine 154. Serine 178 (acyl-ester intermediate) is an active-site residue.

This sequence belongs to the amidase family. GatA subfamily. Heterotrimer of A, B and C subunits.

It carries out the reaction L-glutamyl-tRNA(Gln) + L-glutamine + ATP + H2O = L-glutaminyl-tRNA(Gln) + L-glutamate + ADP + phosphate + H(+). Allows the formation of correctly charged Gln-tRNA(Gln) through the transamidation of misacylated Glu-tRNA(Gln) in organisms which lack glutaminyl-tRNA synthetase. The reaction takes place in the presence of glutamine and ATP through an activated gamma-phospho-Glu-tRNA(Gln). This chain is Glutamyl-tRNA(Gln) amidotransferase subunit A, found in Cereibacter sphaeroides (strain KD131 / KCTC 12085) (Rhodobacter sphaeroides).